The primary structure comprises 439 residues: tRNA-2-methylthio-N(6)-dimethylallyladenosine synthase (439 aa).

In terms of domain architecture, MTTase N-terminal spans 2-115 (KGLYIKTYGC…LPELIVKASR (114 aa)). The [4Fe-4S] cluster site is built by Cys-11, Cys-47, Cys-78, Cys-155, Cys-159, and Cys-162. One can recognise a Radical SAM core domain in the interval 141-372 (NSQGSSAFLA…QKLISKQQLE (232 aa)). Positions 375-439 (QSMVGKTIPV…QSSLLGCAFH (65 aa)) constitute a TRAM domain.

Belongs to the methylthiotransferase family. MiaB subfamily. In terms of assembly, monomer. The cofactor is [4Fe-4S] cluster.

Its subcellular location is the cytoplasm. The enzyme catalyses N(6)-dimethylallyladenosine(37) in tRNA + (sulfur carrier)-SH + AH2 + 2 S-adenosyl-L-methionine = 2-methylsulfanyl-N(6)-dimethylallyladenosine(37) in tRNA + (sulfur carrier)-H + 5'-deoxyadenosine + L-methionine + A + S-adenosyl-L-homocysteine + 2 H(+). Catalyzes the methylthiolation of N6-(dimethylallyl)adenosine (i(6)A), leading to the formation of 2-methylthio-N6-(dimethylallyl)adenosine (ms(2)i(6)A) at position 37 in tRNAs that read codons beginning with uridine. This is tRNA-2-methylthio-N(6)-dimethylallyladenosine synthase from Wolbachia pipientis wMel.